Here is a 333-residue protein sequence, read N- to C-terminus: D-alanine--D-alanine ligase (333 aa).

Residues 124-329 enclose the ATP-grasp domain; sequence KMWFSALGIR…FAQYLSGNIM (206 aa). 154 to 209 provides a ligand contact to ATP; it reads ALEKWGSIFIKAASQGSSVGCYRVDNKEQLANSLEEAFKYSPYVVVEKTINARELE. 3 residues coordinate Mg(2+): Asp283, Glu296, and Asn298.

The protein belongs to the D-alanine--D-alanine ligase family. The cofactor is Mg(2+). Requires Mn(2+) as cofactor.

The protein resides in the cytoplasm. It carries out the reaction 2 D-alanine + ATP = D-alanyl-D-alanine + ADP + phosphate + H(+). It participates in cell wall biogenesis; peptidoglycan biosynthesis. Cell wall formation. In Shewanella halifaxensis (strain HAW-EB4), this protein is D-alanine--D-alanine ligase.